The sequence spans 281 residues: Energy-coupling factor transporter ATP-binding protein EcfA1 (281 aa).

Positions 7–242 (IAAEDITFRY…NQDLIKIGLD (236 aa)) constitute an ABC transporter domain. 42–49 (GHNGSGKS) is an ATP binding site.

This sequence belongs to the ABC transporter superfamily. Energy-coupling factor EcfA family. As to quaternary structure, forms a stable energy-coupling factor (ECF) transporter complex composed of 2 membrane-embedded substrate-binding proteins (S component), 2 ATP-binding proteins (A component) and 2 transmembrane proteins (T component).

It localises to the cell membrane. In terms of biological role, ATP-binding (A) component of a common energy-coupling factor (ECF) ABC-transporter complex. Unlike classic ABC transporters this ECF transporter provides the energy necessary to transport a number of different substrates. The sequence is that of Energy-coupling factor transporter ATP-binding protein EcfA1 from Bacillus licheniformis (strain ATCC 14580 / DSM 13 / JCM 2505 / CCUG 7422 / NBRC 12200 / NCIMB 9375 / NCTC 10341 / NRRL NRS-1264 / Gibson 46).